The chain runs to 156 residues: Transcriptional repressor NrdR (156 aa).

A zinc finger spans residues 3 to 34 (CPSCQFNGTRVVDSRPVDDNKEIRRRRECESC). An ATP-cone domain is found at 49–139 (LVVVKKEGSR…VYRQFKDINV (91 aa)).

Belongs to the NrdR family. Zn(2+) is required as a cofactor.

In terms of biological role, negatively regulates transcription of bacterial ribonucleotide reductase nrd genes and operons by binding to NrdR-boxes. The polypeptide is Transcriptional repressor NrdR (Lysinibacillus sphaericus (strain C3-41)).